The following is a 242-amino-acid chain: ATP synthase subunit a (242 aa).

6 helical membrane passes run 29 to 49 (SAVA…TAFV), 84 to 104 (FFPL…LGMV), 114 to 134 (IIVT…YGIY), 140 to 160 (FFSL…MVII), 181 to 201 (VAGH…TWLF), and 206 to 226 (IALV…QAYI).

Belongs to the ATPase A chain family. F-type ATPases have 2 components, CF(1) - the catalytic core - and CF(0) - the membrane proton channel. CF(1) has five subunits: alpha(3), beta(3), gamma(1), delta(1), epsilon(1). CF(0) has three main subunits: a(1), b(2) and c(9-12). The alpha and beta chains form an alternating ring which encloses part of the gamma chain. CF(1) is attached to CF(0) by a central stalk formed by the gamma and epsilon chains, while a peripheral stalk is formed by the delta and b chains.

It is found in the cell inner membrane. In terms of biological role, key component of the proton channel; it plays a direct role in the translocation of protons across the membrane. This chain is ATP synthase subunit a, found in Orientia tsutsugamushi (strain Ikeda) (Rickettsia tsutsugamushi).